The chain runs to 677 residues: Beta-galactosidase (677 aa).

The first 23 residues, 1–23 (MPGFLVRILPLLLALLLLGPTRG), serve as a signal peptide directing secretion. A propeptide spanning residues 24–28 (LRNAT) is cleaved from the precursor. The N-linked (GlcNAc...) asparagine glycan is linked to Asn-26. Residues Tyr-83, Glu-129, and Asn-187 each coordinate substrate. The active-site Proton donor is the Glu-188. The cysteines at positions 195 and 230 are disulfide-linked. Residue Asn-247 is glycosylated (N-linked (GlcNAc...) asparagine). The active-site Nucleophile is Glu-268. Substrate is bound at residue Tyr-333. Residues Asn-464, Asn-498, Asn-545, and Asn-555 are each glycosylated (N-linked (GlcNAc...) asparagine). Cysteines 626 and 634 form a disulfide. The interval 654 to 677 (SKPVEKKLMPSPPQKNKDSWLDHV) is disordered. The segment covering 668–677 (KNKDSWLDHV) has biased composition (basic and acidic residues).

This sequence belongs to the glycosyl hydrolase 35 family. In terms of assembly, homodimer. May form higher multimers.

It is found in the lysosome. It catalyses the reaction Hydrolysis of terminal non-reducing beta-D-galactose residues in beta-D-galactosides.. Functionally, cleaves beta-linked terminal galactosyl residues from gangliosides, glycoproteins, and glycosaminoglycans. The protein is Beta-galactosidase (GLB1) of Pongo abelii (Sumatran orangutan).